Reading from the N-terminus, the 361-residue chain is Polygalacturonase (361 aa).

An N-terminal signal peptide occupies residues 1 to 18 (MISANSLLISTLCAFAIA). A disulfide bridge connects residues cysteine 27 and cysteine 43. PbH1 repeat units follow at residues 155–185 (CSDLTISDITIDIRDGDSAGGHNTDGFDVGS), 186–207 (SSNVLIQGCTVYNQDDCIAVNS), 208–228 (GSTIKFMNNYCYNGHGISVGS), 237–258 (VNGFWAENNHVINSDNGLRIKT), and 266–288 (VTNVNFISNKISGIKSYGIVIEG). Aspartate 200 functions as the Proton donor in the catalytic mechanism. Cysteine 202 and cysteine 218 form a disulfide bridge. The active site involves histidine 222. 2 N-linked (GlcNAc...) asparagine glycosylation sites follow: asparagine 318 and asparagine 330. A disulfide bridge links cysteine 350 with cysteine 361.

Belongs to the glycosyl hydrolase 28 family.

The catalysed reaction is (1,4-alpha-D-galacturonosyl)n+m + H2O = (1,4-alpha-D-galacturonosyl)n + (1,4-alpha-D-galacturonosyl)m.. The protein is Polygalacturonase (PGU1) of Saccharomyces cerevisiae (strain ATCC 204508 / S288c) (Baker's yeast).